Here is a 653-residue protein sequence, read N- to C-terminus: tRNA uridine 5-carboxymethylaminomethyl modification enzyme MnmG (653 aa).

FAD-binding positions include 18 to 23, valine 130, and threonine 195; that span reads GAGHAG. 287 to 301 is a binding site for NAD(+); the sequence is GPRYCPSIEDKVVRF. Glutamine 384 serves as a coordination point for FAD. A disordered region spans residues 624–653; it reads SQTKSSASVDKRASSDNESSRPTSSASDSL. Over residues 632–642 the composition is skewed to basic and acidic residues; that stretch reads VDKRASSDNES. Positions 643–653 are enriched in polar residues; the sequence is SRPTSSASDSL.

This sequence belongs to the MnmG family. Homodimer. Heterotetramer of two MnmE and two MnmG subunits. Requires FAD as cofactor.

It is found in the cytoplasm. Functionally, NAD-binding protein involved in the addition of a carboxymethylaminomethyl (cmnm) group at the wobble position (U34) of certain tRNAs, forming tRNA-cmnm(5)s(2)U34. The sequence is that of tRNA uridine 5-carboxymethylaminomethyl modification enzyme MnmG from Rhodopirellula baltica (strain DSM 10527 / NCIMB 13988 / SH1).